The following is a 176-amino-acid chain: NAD(P)H-quinone oxidoreductase subunit 6, chloroplastic (176 aa).

5 helical membrane passes run 10–30 (FLLVFLGSGLILGSLGVVLLT), 32–52 (PIYSAFSLGLVLVCISLFYIL), 61–81 (AQLLIYVGAINILILFAVMFM), 92–112 (LWTVGDGITSLVCTSILVSLM), and 152–172 (FFLPFELISIILLVALIGAIA).

It belongs to the complex I subunit 6 family. NDH is composed of at least 16 different subunits, 5 of which are encoded in the nucleus.

It is found in the plastid. The protein resides in the chloroplast thylakoid membrane. It catalyses the reaction a plastoquinone + NADH + (n+1) H(+)(in) = a plastoquinol + NAD(+) + n H(+)(out). The catalysed reaction is a plastoquinone + NADPH + (n+1) H(+)(in) = a plastoquinol + NADP(+) + n H(+)(out). Its function is as follows. NDH shuttles electrons from NAD(P)H:plastoquinone, via FMN and iron-sulfur (Fe-S) centers, to quinones in the photosynthetic chain and possibly in a chloroplast respiratory chain. The immediate electron acceptor for the enzyme in this species is believed to be plastoquinone. Couples the redox reaction to proton translocation, and thus conserves the redox energy in a proton gradient. This is NAD(P)H-quinone oxidoreductase subunit 6, chloroplastic (ndhG) from Eucalyptus globulus subsp. globulus (Tasmanian blue gum).